We begin with the raw amino-acid sequence, 518 residues long: Serine incorporator 4 (518 aa).

Helical transmembrane passes span 59–79 (CSRL…CLLL), 122–142 (VCAG…HLHS), 153–173 (SFWL…FCIP), 184–204 (IGIC…TAFA), 222–242 (FLAV…GAVL), 259–279 (LLSL…APCI), 286–306 (SGLL…FSAL), 338–357 (ISLA…FACN), 427–447 (AFHF…TNWF), and 470–490 (VASC…PLCW).

Belongs to the TDE1 family.

The protein localises to the membrane. Incorporates a polar amino acid serine into membranes and facilitates the synthesis of two serine-derived lipids, phosphatidylserine and sphingolipids. The sequence is that of Serine incorporator 4 (SERINC4) from Homo sapiens (Human).